A 481-amino-acid polypeptide reads, in one-letter code: Cerebral cavernous malformations 2 protein-like (481 aa).

Disordered stretches follow at residues 161-193 and 214-290; these read PVPA…GTAE and EARA…DPQN. The span at 184 to 193 shows a compositional bias: basic and acidic residues; it reads PEKRRVGTAE. The segment covering 214-223 has biased composition (gly residues); sequence EARAAGGGGS. Basic and acidic residues predominate over residues 237–251; that stretch reads WERRQTFSGSWERRH.

It belongs to the CCM2 family.

The polypeptide is Cerebral cavernous malformations 2 protein-like (Ccm2l) (Mus musculus (Mouse)).